The chain runs to 432 residues: MGPRRLLLVAVGLSLCGPLLSSRVPMRQPESERMYATPYATPNPRSFFLRNPSEDTFEQFPLGDEEEKNESIPLEGRAVYLNKSRFPPMPPPPFISEDASGYLTSPWLTLFIPSVYTFVFIVSLPLNILAIAVFVFRMKVKKPAVVYMLHLAMADVLFVSVLPFKISYYFSGTDWQFGSGMCRFATAACYCNMYASIMLMTVISIDRFLAVVYPIQSLSWRTLGRANFTCVVIWVMAIMGVVPLLLKEQTTQVPGLNITTCHDVLNETLLHGFYSYYFSAFSAIFFLVPLIISTVCYTSIIRCLSSSAVANRSKKSRALFLSAAVFCIFIVCFGPTNVLLIVHYLLLSDSPGTETAYFAYLLCVCVTSVASCIDPLIYYYASSECQKHLYSILCCRESSDSNSCNSTGQLMPSKMDTCSSHLNNSIYKKLLA.

The first 21 residues, 1–21 (MGPRRLLLVAVGLSLCGPLLS), serve as a signal peptide directing secretion. A propeptide spans 22 to 45 (SRVPMRQPESERMYATPYATPNPR) (removed for receptor activation). Topologically, residues 46–109 (SFFLRNPSED…SGYLTSPWLT (64 aa)) are extracellular. N-linked (GlcNAc...) asparagine glycosylation is found at N69 and N82. Residues 110–135 (LFIPSVYTFVFIVSLPLNILAIAVFV) form a helical membrane-spanning segment. The Cytoplasmic portion of the chain corresponds to 136–144 (FRMKVKKPA). A helical transmembrane segment spans residues 145 to 164 (VVYMLHLAMADVLFVSVLPF). Residues 165–183 (KISYYFSGTDWQFGSGMCR) are Extracellular-facing. A disulfide bridge links C182 with C261. A helical membrane pass occupies residues 184 to 205 (FATAACYCNMYASIMLMTVISI). Over 206 to 225 (DRFLAVVYPIQSLSWRTLGR) the chain is Cytoplasmic. Residues 226–246 (ANFTCVVIWVMAIMGVVPLLL) form a helical membrane-spanning segment. The Extracellular segment spans residues 247 to 275 (KEQTTQVPGLNITTCHDVLNETLLHGFYS). N-linked (GlcNAc...) asparagine glycosylation is found at N257 and N266. The chain crosses the membrane as a helical span at residues 276-295 (YYFSAFSAIFFLVPLIISTV). Topologically, residues 296–318 (CYTSIIRCLSSSAVANRSKKSRA) are cytoplasmic. The chain crosses the membrane as a helical span at residues 319–341 (LFLSAAVFCIFIVCFGPTNVLLI). Residues 342–357 (VHYLLLSDSPGTETAY) lie on the Extracellular side of the membrane. A helical membrane pass occupies residues 358–381 (FAYLLCVCVTSVASCIDPLIYYYA). Over 382-432 (SSECQKHLYSILCCRESSDSNSCNSTGQLMPSKMDTCSSHLNNSIYKKLLA) the chain is Cytoplasmic. The residue at position 425 (S425) is a Phosphoserine.

Belongs to the G-protein coupled receptor 1 family. In terms of processing, proteolytic cleavage by thrombin generates a new N-terminus that functions as a tethered ligand. Also proteolytically cleaved by cathepsin CTSG. Phosphorylated in the C-terminal tail; probably mediating desensitization prior to the uncoupling and internalization of the receptor. Expressed in primary cultured oligodendrocytes.

It localises to the cell membrane. In terms of biological role, high affinity receptor that binds the activated thrombin, leading to calcium release from intracellular stores. The thrombin-activated receptor signaling pathway is mediated through PTX-insensitive G proteins, activation of phospholipase C resulting in the production of 1D-myo-inositol 1,4,5-trisphosphate (InsP3) which binds to InsP3 receptors causing calcium release from the stores. In astrocytes, the calcium released into the cytosol allows the Ca(2+)-dependent release of L-glutamate into the synaptic cleft through BEST1, that targets the neuronal postsynaptic GRIN2A/NMDAR receptor resulting in the synaptic plasticity regulation. May play a role in platelets activation and in vascular development. Mediates up-regulation of pro-inflammatory cytokines, such as MCP-1/CCL2 and IL6, triggered by coagulation factor Xa (F10) in cardiac fibroblasts and umbilical vein endothelial cells. This Rattus norvegicus (Rat) protein is Proteinase-activated receptor 1.